The following is an 81-amino-acid chain: Sulfur carrier protein TusA (81 aa).

The active-site Cysteine persulfide intermediate is the Cys19.

This sequence belongs to the sulfur carrier protein TusA family.

Its subcellular location is the cytoplasm. Sulfur carrier protein which probably makes part of a sulfur-relay system. The polypeptide is Sulfur carrier protein TusA (Shewanella baltica (strain OS223)).